A 1786-amino-acid chain; its full sequence is Transcription initiation factor TFIID subunit 1b (1786 aa).

Disordered regions lie at residues Glu54 to Leu83 and Phe350 to Leu372. A compositionally biased stretch (basic and acidic residues) spans Gly61 to Leu83. The segment covering Ser352–Thr362 has biased composition (polar residues). One can recognise a Ubiquitin-like domain in the interval Met574–Leu650. Residues Met1303 to Arg1313 are compositionally biased toward basic residues. Disordered stretches follow at residues Met1303–Ala1382, Leu1397–Ala1471, and Ser1596–Gln1634. The span at Thr1357–Ser1377 shows a compositional bias: polar residues. Residues Leu1397 to Ala1407 are compositionally biased toward basic residues. Positions His1433–Leu1464 are enriched in polar residues. Coiled coils occupy residues Arg1591–Tyr1620 and Leu1752–Arg1786. Over residues Arg1604–Gln1613 the composition is skewed to basic residues. The 119-residue stretch at Lys1656–Ala1774 folds into the Bromo domain.

The protein belongs to the TAF1 family. In terms of assembly, component of the TFIID complex. TFIID is composed of TATA binding protein (TBP) and a number of TBP-associated factors (TAFs) whose MWs range from 14-217 kDa. Expressed in roots, shoots, leaves and inflorescences.

The protein localises to the nucleus. In terms of biological role, TAFs are components of the transcription factor IID (TFIID) complex that is essential for mediating regulation of RNA polymerase transcription. Core scaffold of the TFIID complex. Acts as a histone acetyltransferase involved in the light regulation of growth and gene expression. Required for H3K9, H3K27, and H4K12 acetylation on the target promoters. This is Transcription initiation factor TFIID subunit 1b (TAF1B) from Arabidopsis thaliana (Mouse-ear cress).